The following is a 157-amino-acid chain: Spore germination protein GerT (157 aa).

The protein resides in the spore coat. Functionally, involved in spore germination; probably required at the earliest stage of germination. The sequence is that of Spore germination protein GerT (gerT) from Bacillus subtilis (strain 168).